We begin with the raw amino-acid sequence, 288 residues long: Bifunctional protein FolD (288 aa).

Residues 166-168 and Ile-232 contribute to the NADP(+) site; that span reads GAS.

This sequence belongs to the tetrahydrofolate dehydrogenase/cyclohydrolase family. In terms of assembly, homodimer.

It carries out the reaction (6R)-5,10-methylene-5,6,7,8-tetrahydrofolate + NADP(+) = (6R)-5,10-methenyltetrahydrofolate + NADPH. The enzyme catalyses (6R)-5,10-methenyltetrahydrofolate + H2O = (6R)-10-formyltetrahydrofolate + H(+). It participates in one-carbon metabolism; tetrahydrofolate interconversion. Its function is as follows. Catalyzes the oxidation of 5,10-methylenetetrahydrofolate to 5,10-methenyltetrahydrofolate and then the hydrolysis of 5,10-methenyltetrahydrofolate to 10-formyltetrahydrofolate. The protein is Bifunctional protein FolD of Escherichia fergusonii (strain ATCC 35469 / DSM 13698 / CCUG 18766 / IAM 14443 / JCM 21226 / LMG 7866 / NBRC 102419 / NCTC 12128 / CDC 0568-73).